The following is a 304-amino-acid chain: tRNA dimethylallyltransferase (304 aa).

An ATP-binding site is contributed by 2–9 (GPTASGKT). 4–9 (TASGKT) provides a ligand contact to substrate. Positions 28-31 (DSAL) are interaction with substrate tRNA.

This sequence belongs to the IPP transferase family. Monomer. Requires Mg(2+) as cofactor.

The catalysed reaction is adenosine(37) in tRNA + dimethylallyl diphosphate = N(6)-dimethylallyladenosine(37) in tRNA + diphosphate. Catalyzes the transfer of a dimethylallyl group onto the adenine at position 37 in tRNAs that read codons beginning with uridine, leading to the formation of N6-(dimethylallyl)adenosine (i(6)A). This Blochmanniella pennsylvanica (strain BPEN) protein is tRNA dimethylallyltransferase.